A 275-amino-acid chain; its full sequence is NH(3)-dependent NAD(+) synthetase (275 aa).

Residue 46–53 participates in ATP binding; that stretch reads GISGGQDS. Asp52 provides a ligand contact to Mg(2+). Arg140 is a binding site for deamido-NAD(+). Residue Thr160 participates in ATP binding. Residue Glu165 coordinates Mg(2+). Deamido-NAD(+) is bound by residues Lys173 and Asp180. Positions 189 and 211 each coordinate ATP. 260-261 serves as a coordination point for deamido-NAD(+); sequence HK.

This sequence belongs to the NAD synthetase family. In terms of assembly, homodimer.

The catalysed reaction is deamido-NAD(+) + NH4(+) + ATP = AMP + diphosphate + NAD(+) + H(+). The protein operates within cofactor biosynthesis; NAD(+) biosynthesis; NAD(+) from deamido-NAD(+) (ammonia route): step 1/1. In terms of biological role, catalyzes the ATP-dependent amidation of deamido-NAD to form NAD. Uses ammonia as a nitrogen source. This chain is NH(3)-dependent NAD(+) synthetase, found in Escherichia coli O157:H7.